An 879-amino-acid polypeptide reads, in one-letter code: JmjC domain-containing histone demethylation protein 1 (879 aa).

Disordered regions lie at residues 1–45, 117–212, and 407–449; these read MSEQ…EEGK, STSP…PKRK, and KDVK…EGLK. A PHD-type zinc finger spans residues 23–116; that stretch reads PEPCPLCRET…KWYCAPCLAR (94 aa). Basic and acidic residues-rich tracts occupy residues 183–192 and 407–433; these read IDMKSEREQQ and KDVKEKGRGNDSRESSEIRKEGSHLTE. The JmjC domain occupies 416-598; that stretch reads NDSRESSEIR…TQLRLRQIEI (183 aa). Thr472 provides a ligand contact to substrate. 2 residues coordinate Fe cation: His475 and Asp477. Residue Lys492 coordinates substrate. His566 contributes to the Fe cation binding site. Positions 763–879 are disordered; that stretch reads HPPAWSENRQ…KVEEDMDIDH (117 aa). The segment covering 769 to 782 has biased composition (polar residues); that stretch reads ENRQSPQIETTTVQ. Positions 786-818 are enriched in low complexity; it reads PSTSSSDAISGSGPGASPGASANGGANENEQAE. Positions 848 to 864 are enriched in basic and acidic residues; the sequence is FVEKKTVWGPKLDKEKI.

Belongs to the JHDM1 histone demethylase family. It depends on Fe(2+) as a cofactor.

It localises to the nucleus. The catalysed reaction is N(6),N(6)-dimethyl-L-lysyl(36)-[histone H3] + 2 2-oxoglutarate + 2 O2 = L-lysyl(36)-[histone H3] + 2 formaldehyde + 2 succinate + 2 CO2. Its function is as follows. Histone demethylase that specifically demethylates 'Lys-36' of histone H3, thereby playing a central role in histone code. This Cryptococcus neoformans var. neoformans serotype D (strain B-3501A) (Filobasidiella neoformans) protein is JmjC domain-containing histone demethylation protein 1 (JHD1).